The primary structure comprises 378 residues: Cytochrome b (378 aa).

4 helical membrane passes run 33 to 53, 77 to 98, 113 to 133, and 178 to 198; these read SGSL…FLSM, WLIR…YFHI, XNVG…GYVL, and FFAF…IHLI. Residues His-83 and His-97 each contribute to the heme b site. A heme b-binding site is contributed by His-196. His-201 is an a ubiquinone binding site. Transmembrane regions (helical) follow at residues 226 to 246, 288 to 308, 320 to 340, and 347 to 367; these read FKDL…ALFS, LGGV…PILH, LTQF…WIGG, and FIII…VLFP.

This sequence belongs to the cytochrome b family. In terms of assembly, the cytochrome bc1 complex contains 3 respiratory subunits (MT-CYB, CYC1 and UQCRFS1), 2 core proteins (UQCRC1 and UQCRC2) and probably 6 low-molecular weight proteins. It depends on heme b as a cofactor.

The protein resides in the mitochondrion inner membrane. In terms of biological role, component of the ubiquinol-cytochrome c reductase complex (complex III or cytochrome b-c1 complex) that is part of the mitochondrial respiratory chain. The b-c1 complex mediates electron transfer from ubiquinol to cytochrome c. Contributes to the generation of a proton gradient across the mitochondrial membrane that is then used for ATP synthesis. This is Cytochrome b (mt-cyb) from Nannacara anomala (Goldeneye cichlid).